The following is a 475-amino-acid chain: Equilibrative nucleoside transporter 3 (475 aa).

The interval 1–24 is disordered; that stretch reads MAVVSEDDFQHSSNSTYRTTSSSL. Residues 1-53 are Cytoplasmic-facing; the sequence is MAVVSEDDFQHSSNSTYRTTSSSLRADQEALLEKLLDRPPPGLQRPEDRFCGT. Residues 12–23 show a composition bias toward low complexity; it reads SSNSTYRTTSSS. Phosphoserine occurs at positions 21 and 23. Positions 31 to 32 match the Dileucine internalization motif motif; sequence LL. Residues 54–74 form a helical membrane-spanning segment; the sequence is YIIFFSLGIGSLLPWNFFITA. At 75–105 the chain is on the extracellular side; the sequence is KEYWMFKLRNSSSPATGEDPEGSDILNYFES. Asparagine 84 carries N-linked (GlcNAc...) asparagine glycosylation. Residues 106-126 traverse the membrane as a helical segment; the sequence is YLAVASTVPSMLCLVANFLLV. Residues 127–134 lie on the Cytoplasmic side of the membrane; that stretch reads NRVAVHIR. A helical transmembrane segment spans residues 135–155; it reads VLASLTVILAIFMVITALVKV. Over 156-162 the chain is Extracellular; that stretch reads DTSSWTR. The chain crosses the membrane as a helical span at residues 163 to 183; that stretch reads GFFAVTIVCMVILSGASTVFS. The Cytoplasmic segment spans residues 184–199; the sequence is SSIYGMTGSFPMRNSQ. Residues 200-220 form a helical membrane-spanning segment; it reads ALISGGAMGGTVSAVASLVDL. Residues 221 to 230 lie on the Extracellular side of the membrane; the sequence is AASSDVRNSA. A helical transmembrane segment spans residues 231–251; sequence LAFFLTATVFLVLCMGLYLLL. The Cytoplasmic segment spans residues 252-305; that stretch reads SRLEYARYYMRPVLAAHVFSGEEELPQDSLSAPSVASRFIDSHTPPLRPILKKT. A helical transmembrane segment spans residues 306-326; it reads ASLGFCVTYVFFITSLIYPAI. Over 327 to 337 the chain is Extracellular; it reads CTNIESLNKGS. A helical transmembrane segment spans residues 338–358; that stretch reads GSLWTTKFFIPLTTFLLYNFA. The Cytoplasmic segment spans residues 359-377; the sequence is DLCGRQLTAWIQVPGPNSK. Residues 378-398 form a helical membrane-spanning segment; the sequence is ALPGFVLLRTCLIPLFVLCNY. Topologically, residues 399 to 415 are extracellular; it reads QPRVHLKTVVFQSDVYP. Residues 416–436 form a helical membrane-spanning segment; the sequence is ALLSSLLGLSNGYLSTLALLY. The Cytoplasmic portion of the chain corresponds to 437-454; it reads GPKIVPRELAEATGVVMS. Residues 455–475 form a helical membrane-spanning segment; it reads FYVCLGLTLGSACSTLLVHLI.

Belongs to the SLC29A/ENT transporter (TC 2.A.57) family. As to expression, widely expressed in both adult and fetal tissues. Highest levels in placenta, uterus, ovary, spleen, lymph node and bone marrow. Expressed in liver. Lowest levels in brain and heart. Expressed in macrophages.

It localises to the lysosome membrane. It is found in the late endosome membrane. Its subcellular location is the mitochondrion membrane. The protein localises to the cell membrane. The catalysed reaction is adenosine(in) = adenosine(out). It carries out the reaction guanosine(in) = guanosine(out). It catalyses the reaction inosine(in) = inosine(out). The enzyme catalyses uridine(out) = uridine(in). The catalysed reaction is cytidine(in) = cytidine(out). It carries out the reaction thymidine(in) = thymidine(out). It catalyses the reaction 2'-deoxyadenosine(in) = 2'-deoxyadenosine(out). The enzyme catalyses 2'-deoxycytidine(in) = 2'-deoxycytidine(out). The catalysed reaction is guanine(out) = guanine(in). It carries out the reaction uracil(in) = uracil(out). It catalyses the reaction (R)-noradrenaline(out) = (R)-noradrenaline(in). The enzyme catalyses dopamine(out) = dopamine(in). The catalysed reaction is serotonin(out) = serotonin(in). It carries out the reaction tyramine(in) = tyramine(out). It catalyses the reaction ATP(in) = ATP(out). In terms of biological role, uniporter that mediates the facilitative transport of nucleoside across lysosomal and mitochondrial membranes. Functions as a non-electrogenic Na(+)-independent transporter. Substrate transport is pH-dependent and enhanced under acidic condition, probably reflecting the location of the transporter in acidic intracellular compartments. Proton is not a cotransporting ion but most likely change the ionization state of the transporter which dictates transport-permissible/impermissible conformation for nucleoside translocation. May direct the nucleoside transport from lysosomes to cytosol or cytosol to mitochondria to facilitate the fundamental function of salvage synthesis of nucleic acids. Involved in the transport of nucleosides (adenosine, guanosine, uridine, thymidine, cytidine and inosine) and deoxynucleosides (deoxyadenosine, deoxycytidine). Also mediates transport of purine nucleobases (adenine, guanine) and pyrimidine nucleobases (uracil). Also able to transport monoamine neurotransmitters dopamine, serotonin, noradrenaline and tyramine. Capable of transporting ATP. Mediates nucleoside export from lysosomes in macrophages, which regulates macrophage functions and numbers. This Homo sapiens (Human) protein is Equilibrative nucleoside transporter 3.